The sequence spans 279 residues: Acetylglutamate kinase (279 aa).

Substrate-binding positions include 64-65 (GG), Arg86, and Asn177.

It belongs to the acetylglutamate kinase family. ArgB subfamily.

The protein localises to the cytoplasm. It catalyses the reaction N-acetyl-L-glutamate + ATP = N-acetyl-L-glutamyl 5-phosphate + ADP. It functions in the pathway amino-acid biosynthesis; L-arginine biosynthesis; N(2)-acetyl-L-ornithine from L-glutamate: step 2/4. Its function is as follows. Catalyzes the ATP-dependent phosphorylation of N-acetyl-L-glutamate. The protein is Acetylglutamate kinase of Campylobacter jejuni subsp. jejuni serotype O:23/36 (strain 81-176).